Reading from the N-terminus, the 337-residue chain is Ketol-acid reductoisomerase (NADP(+)) (337 aa).

A KARI N-terminal Rossmann domain is found at 1 to 180 (MKIYYDTDVN…GGGRAGIIET (180 aa)). NADP(+) is bound by residues 24–27 (YGSQ), Arg47, Ser51, and 81–84 (DELQ). Residue His106 is part of the active site. Gly132 is an NADP(+) binding site. Residues 181–326 (TFKDETETDL…EKLRAMMPWL (146 aa)) enclose the KARI C-terminal knotted domain. Residues Asp189, Glu193, Glu225, and Glu229 each coordinate Mg(2+). Position 250 (Ser250) interacts with substrate.

Belongs to the ketol-acid reductoisomerase family. The cofactor is Mg(2+).

It carries out the reaction (2R)-2,3-dihydroxy-3-methylbutanoate + NADP(+) = (2S)-2-acetolactate + NADPH + H(+). The enzyme catalyses (2R,3R)-2,3-dihydroxy-3-methylpentanoate + NADP(+) = (S)-2-ethyl-2-hydroxy-3-oxobutanoate + NADPH + H(+). Its pathway is amino-acid biosynthesis; L-isoleucine biosynthesis; L-isoleucine from 2-oxobutanoate: step 2/4. The protein operates within amino-acid biosynthesis; L-valine biosynthesis; L-valine from pyruvate: step 2/4. Its function is as follows. Involved in the biosynthesis of branched-chain amino acids (BCAA). Catalyzes an alkyl-migration followed by a ketol-acid reduction of (S)-2-acetolactate (S2AL) to yield (R)-2,3-dihydroxy-isovalerate. In the isomerase reaction, S2AL is rearranged via a Mg-dependent methyl migration to produce 3-hydroxy-3-methyl-2-ketobutyrate (HMKB). In the reductase reaction, this 2-ketoacid undergoes a metal-dependent reduction by NADPH to yield (R)-2,3-dihydroxy-isovalerate. The sequence is that of Ketol-acid reductoisomerase (NADP(+)) from Thermodesulfovibrio yellowstonii (strain ATCC 51303 / DSM 11347 / YP87).